The primary structure comprises 406 residues: Cysteine desulfurase IscS (406 aa).

Residues 75–76 (AT), asparagine 155, glutamine 183, and 203–205 (SSH) contribute to the pyridoxal 5'-phosphate site. Lysine 206 bears the N6-(pyridoxal phosphate)lysine mark. Threonine 243 contributes to the pyridoxal 5'-phosphate binding site. Cysteine 330 serves as the catalytic Cysteine persulfide intermediate. Cysteine 330 contacts [2Fe-2S] cluster.

This sequence belongs to the class-V pyridoxal-phosphate-dependent aminotransferase family. NifS/IscS subfamily. Homodimer. Forms a heterotetramer with IscU, interacts with other sulfur acceptors. Pyridoxal 5'-phosphate serves as cofactor.

It is found in the cytoplasm. The enzyme catalyses (sulfur carrier)-H + L-cysteine = (sulfur carrier)-SH + L-alanine. It functions in the pathway cofactor biosynthesis; iron-sulfur cluster biosynthesis. In terms of biological role, master enzyme that delivers sulfur to a number of partners involved in Fe-S cluster assembly, tRNA modification or cofactor biosynthesis. Catalyzes the removal of elemental sulfur atoms from cysteine to produce alanine. Functions as a sulfur delivery protein for Fe-S cluster synthesis onto IscU, an Fe-S scaffold assembly protein, as well as other S acceptor proteins. This Glaesserella parasuis serovar 5 (strain SH0165) (Haemophilus parasuis) protein is Cysteine desulfurase IscS.